The primary structure comprises 1221 residues: X-linked retinitis pigmentosa GTPase regulator-interacting protein 1 (1221 aa).

Composition is skewed to polar residues over residues 1–15 (MIPT…TQPP) and 88–97 (GGTAPSSTSV). 3 disordered regions span residues 1 to 22 (MIPT…MTRD), 68 to 107 (AEAA…SCSS), and 119 to 196 (SLAS…PEKM). Basic and acidic residues-rich tracts occupy residues 134–147 (HRAE…RDRL) and 155–168 (FKEH…RGEV). The stretch at 267–533 (LGAAHNALLS…EEQLKDVAYG (267 aa)) forms a coiled coil. The region spanning 723 to 843 (QKDEPRSGTW…AQNKSIQGDF (121 aa)) is the C2 domain. The segment at 869–947 (PENFPKPEAQ…YSRRKHGRKT (79 aa)) is disordered. A compositionally biased stretch (polar residues) spans 903–914 (QMVSIDTPTEAG). The interval 1027-1216 (SEAQTTDSDE…ALQAIYKEMT (190 aa)) is interaction with RPGR.

The protein belongs to the RPGRIP1 family. Forms homodimers and elongated homopolymers. Interacts with NPHP4. Interacts with NEK4. Interacts with RPGR. Interacts with SPATA7. Interacts with CEP290/NPHP6; mediating the association between RPGR and CEP290/NPHP6. As to expression, retina, brain, skeletal muscle and kidney. Colocalizes with RGPR in the outer segment of rod photoreceptors and cone outer segments.

Its subcellular location is the cell projection. The protein localises to the cilium. May function as scaffolding protein. Required for normal location of RPGR at the connecting cilium of photoreceptor cells. Required for normal disk morphogenesis and disk organization in the outer segment of photoreceptor cells and for survival of photoreceptor cells. In Bos taurus (Bovine), this protein is X-linked retinitis pigmentosa GTPase regulator-interacting protein 1 (RPGRIP1).